A 362-amino-acid polypeptide reads, in one-letter code: Peptide chain release factor 1 (362 aa).

An N5-methylglutamine modification is found at Gln-237. Over residues 285–295 (EEKRHAEEAST) the composition is skewed to basic and acidic residues. Residues 285–311 (EEKRHAEEASTRRNLLGSGDRSDRIRT) form a disordered region.

Belongs to the prokaryotic/mitochondrial release factor family. Post-translationally, methylated by PrmC. Methylation increases the termination efficiency of RF1.

It localises to the cytoplasm. In terms of biological role, peptide chain release factor 1 directs the termination of translation in response to the peptide chain termination codons UAG and UAA. This Photobacterium profundum (strain SS9) protein is Peptide chain release factor 1.